The chain runs to 801 residues: Potassium transporter 1 (801 aa).

The interval Met-1 to Thr-20 is disordered. The Cytoplasmic segment spans residues Met-1 to His-57. The helical transmembrane segment at Leu-58–Ser-80 threads the bilayer. The Extracellular portion of the chain corresponds to Thr-81–Gly-94. Residues Val-95–Val-115 traverse the membrane as a helical segment. At Leu-116–Lys-181 the chain is on the cytoplasmic side. A helical transmembrane segment spans residues Met-182 to Thr-202. The Extracellular segment spans residues Pro-203–Pro-219. The chain crosses the membrane as a helical span at residues Asn-220–Val-240. Residues Gln-241–Lys-247 lie on the Cytoplasmic side of the membrane. A helical membrane pass occupies residues Val-248–Leu-268. At Tyr-269–Gly-298 the chain is on the extracellular side. The chain crosses the membrane as a helical span at residues Trp-299–Leu-319. Residues Gly-320–Gln-328 lie on the Cytoplasmic side of the membrane. The chain crosses the membrane as a helical span at residues Ile-329–Tyr-349. The Extracellular segment spans residues Leu-350–Phe-375. Residues Gly-376–Leu-398 form a helical membrane-spanning segment. The Cytoplasmic segment spans residues Ser-399 to Gln-429. The helical transmembrane segment at Val-430–Phe-450 threads the bilayer. Topologically, residues Arg-451–Gly-461 are extracellular. The chain crosses the membrane as a helical span at residues Ile-462–Ile-482. At Trp-483 to Leu-487 the chain is on the cytoplasmic side. The chain crosses the membrane as a helical span at residues Val-488–Ile-508. Residues Leu-509–Lys-511 are Extracellular-facing. A helical membrane pass occupies residues Phe-512 to Thr-532. At Trp-533–Ile-801 the chain is on the cytoplasmic side. Positions Asp-679 to Asp-728 are disordered. Positions Ala-704 to Leu-717 are enriched in polar residues.

The protein belongs to the HAK/KUP transporter (TC 2.A.72.3) family. In terms of tissue distribution, expressed almost exclusively in roots.

It localises to the cell membrane. Its function is as follows. High-affinity potassium transporter. Also transports rubidium, with the same affinity and cesium, with a lower affinity. The protein is Potassium transporter 1 (HAK1) of Oryza sativa subsp. japonica (Rice).